The chain runs to 216 residues: A-type ATP synthase subunit D (216 aa).

It belongs to the V-ATPase D subunit family. Has multiple subunits with at least A(3), B(3), C, D, E, F, H, I and proteolipid K(x). In terms of processing, the N-terminus is blocked.

It is found in the cell membrane. Component of the A-type ATP synthase that produces ATP from ADP in the presence of a proton gradient across the membrane. The chain is A-type ATP synthase subunit D from Sulfurisphaera tokodaii (strain DSM 16993 / JCM 10545 / NBRC 100140 / 7) (Sulfolobus tokodaii).